A 241-amino-acid chain; its full sequence is Large ribosomal subunit protein bL25 (241 aa).

The interval 214-241 (LDAVKAGEEGSRAQQETEEASERADQGQ) is disordered.

Belongs to the bacterial ribosomal protein bL25 family. CTC subfamily. Part of the 50S ribosomal subunit; part of the 5S rRNA/L5/L18/L25 subcomplex. Contacts the 5S rRNA. Binds to the 5S rRNA independently of L5 and L18.

Functionally, this is one of the proteins that binds to the 5S RNA in the ribosome where it forms part of the central protuberance. This Deinococcus geothermalis (strain DSM 11300 / CIP 105573 / AG-3a) protein is Large ribosomal subunit protein bL25.